The chain runs to 217 residues: Ribonuclease HII (217 aa).

The RNase H type-2 domain maps to 17–207 (KVIYGVDEAG…CVGQSVSGAR (191 aa)). Aspartate 23, glutamate 24, and aspartate 116 together coordinate a divalent metal cation.

This sequence belongs to the RNase HII family. Mn(2+) is required as a cofactor. Requires Mg(2+) as cofactor.

Its subcellular location is the cytoplasm. It catalyses the reaction Endonucleolytic cleavage to 5'-phosphomonoester.. In terms of biological role, endonuclease that specifically degrades the RNA of RNA-DNA hybrids. This chain is Ribonuclease HII, found in Nitrosomonas europaea (strain ATCC 19718 / CIP 103999 / KCTC 2705 / NBRC 14298).